The primary structure comprises 408 residues: Putative mannan endo-1,4-beta-mannosidase P (408 aa).

A signal peptide spans 1-23 (MKCLCFIVLLAIVIAQSYVGVEA). A glycan (N-linked (GlcNAc...) asparagine) is linked at Asn-73. The substrate site is built by Trp-85 and Asn-201. Glu-202 serves as the catalytic Proton donor. The active-site Nucleophile is the Glu-322. Residue Trp-364 participates in substrate binding.

It belongs to the glycosyl hydrolase 5 (cellulase A) family.

It is found in the secreted. It carries out the reaction Random hydrolysis of (1-&gt;4)-beta-D-mannosidic linkages in mannans, galactomannans and glucomannans.. This chain is Putative mannan endo-1,4-beta-mannosidase P (MANP), found in Arabidopsis thaliana (Mouse-ear cress).